Reading from the N-terminus, the 314-residue chain is MSSTAAFYLLSTLGGYLVTSFLLLKYPTLLHQRKKQRFLSKHISHRGGAGENLENTMAAFQHAVKIGTDMLELDCHITKDEQVVVSHDENLKRATGVNVNISDLKYCELPPYLGKLDVSFQRACQCEGKDNRIPLLKEVFEAFPNTPINIDIKVNNNVLIKKVSELVKRYNREHLTVWGNANYEIVEKCYKENSDIPILFSLQRVLLILGLFFTGLLPFVPIREQFFEIPMPSIILKLKEPHTMSRSQKFLIWLSDLLLMRKALFDHLTARGIQVYIWVLNEEQEYKRAFDLGATGVMTDYPTKLRDFLHNFSA.

Residues 1 to 3 (MSS) lie on the Extracellular side of the membrane. The helical transmembrane segment at 4–24 (TAAFYLLSTLGGYLVTSFLLL) threads the bilayer. Over 25–195 (KYPTLLHQRK…VEKCYKENSD (171 aa)) the chain is Cytoplasmic. The 270-residue stretch at 40-309 (SKHISHRGGA…DYPTKLRDFL (270 aa)) folds into the GP-PDE domain. E72, D74, and H87 together coordinate a divalent metal cation. Residues 196-216 (IPILFSLQRVLLILGLFFTGL) traverse the membrane as a helical segment. Topologically, residues 217–314 (LPFVPIREQF…LRDFLHNFSA (98 aa)) are extracellular.

Belongs to the glycerophosphoryl diester phosphodiesterase family. In terms of tissue distribution, widely expressed with high expression level in testis.

The protein localises to the cytoplasm. It localises to the membrane. Its subcellular location is the perinuclear region. The protein resides in the endoplasmic reticulum. It carries out the reaction a 1-O-alkyl-sn-glycero-3-phosphocholine + H2O = a 1-O-alkyl-sn-glycero-3-phosphate + choline + H(+). It catalyses the reaction 1-hexadecanoyl-sn-glycero-3-phosphocholine + H2O = 1-hexadecanoyl-sn-glycero-3-phosphate + choline + H(+). The catalysed reaction is N-hexadecanoyl-sn-glycero-3-phosphoethanolamine + H2O = N-hexadecanoylethanolamine + sn-glycerol 3-phosphate + H(+). The enzyme catalyses N-(5Z,8Z,11Z,14Z-eicosatetraenoyl)-1-(9Z-octadecenoyl)-sn-glycero-3-phosphoethanolamine + H2O = N-(5Z,8Z,11Z,14Z-eicosatetraenoyl)-ethanolamine + 1-(9Z-octadecenoyl)-sn-glycero-3-phosphate + H(+). It carries out the reaction N,1-di-(9Z-octadecenoyl)-sn-glycero-3-phosphoethanolamine + H2O = N-(9Z-octadecenoyl) ethanolamine + 1-(9Z-octadecenoyl)-sn-glycero-3-phosphate + H(+). It catalyses the reaction N-hexadecanoyl-1-(9Z-octadecenoyl)-sn-glycero-3-phosphoethanolamine + H2O = N-hexadecanoylethanolamine + 1-(9Z-octadecenoyl)-sn-glycero-3-phosphate + H(+). The catalysed reaction is 1-O-(1Z-octadecenyl)-sn-glycero-3-phospho-N-hexadecanoyl-ethanolamine + H2O = 1-O-(1Z-octadecenyl)-sn-glycero-3-phosphate + N-hexadecanoylethanolamine + H(+). The enzyme catalyses 1-hexadecanoyl-sn-glycero-3-phosphoethanolamine + H2O = 1-hexadecanoyl-sn-glycero-3-phosphate + ethanolamine + H(+). It carries out the reaction 1-O-hexadecyl-sn-glycero-3-phosphocholine + H2O = 1-O-hexadecyl-sn-glycero-3-phosphate + choline + H(+). It catalyses the reaction 1-(9Z-octadecenoyl)-sn-glycero-3-phosphocholine + H2O = 1-(9Z-octadecenoyl)-sn-glycero-3-phosphate + choline + H(+). The catalysed reaction is N,1-dihexadecanoyl-sn-glycero-3-phosphoethanolamine + H2O = N-hexadecanoylethanolamine + 1-hexadecanoyl-sn-glycero-3-phosphate + H(+). The enzyme catalyses 1-O-(1Z-octadecenyl)-sn-glycero-3-phospho-(N-5Z,8Z,11Z,14Z-eicosatetraenoyl)-ethanolamine + H2O = 1-O-(1Z-octadecenyl)-sn-glycero-3-phosphate + N-(5Z,8Z,11Z,14Z-eicosatetraenoyl)-ethanolamine + H(+). It carries out the reaction 1-O-(1Z-octadecenyl)-sn-glycero-3-phospho-(N-9Z-octadecenoyl)-ethanolamine + H2O = 1-O-(1Z-octadecenyl)-sn-glycero-3-phosphate + N-(9Z-octadecenoyl) ethanolamine + H(+). Lysophospholipase D activity is increased by magnesium and manganese and inhibited by calcium in a concentration dependent manner. Loss of lysophospholipase D activity by addition of EDTA. Functionally, hydrolyzes lysoglycerophospholipids to produce lysophosphatidic acid (LPA) and the corresponding amines. Shows a preference for 1-O-alkyl-sn-glycero-3-phosphocholine (lyso-PAF), lysophosphatidylethanolamine (lyso-PE) and lysophosphatidylcholine (lyso-PC). May be involved in bioactive N-acylethanolamine biosynthesis from both N-acyl-lysoplasmenylethanolamin (N-acyl-lysoPlsEt) and N-acyl-lysophosphatidylethanolamin (N-acyl-lysoPE). In addition, hydrolyzes glycerophospho-N-acylethanolamine to N-acylethanolamine. Does not display glycerophosphodiester phosphodiesterase activity, since it cannot hydrolyze either glycerophosphoinositol or glycerophosphocholine. The polypeptide is Lysophospholipase D GDPD1 (Homo sapiens (Human)).